The following is a 356-amino-acid chain: UDP-N-acetylglucosamine--N-acetylmuramyl-(pentapeptide) pyrophosphoryl-undecaprenol N-acetylglucosamine transferase (356 aa).

UDP-N-acetyl-alpha-D-glucosamine-binding residues include R166, S196, and Q290.

This sequence belongs to the glycosyltransferase 28 family. MurG subfamily.

It localises to the cell membrane. It catalyses the reaction Mur2Ac(oyl-L-Ala-gamma-D-Glu-L-Lys-D-Ala-D-Ala)-di-trans,octa-cis-undecaprenyl diphosphate + UDP-N-acetyl-alpha-D-glucosamine = beta-D-GlcNAc-(1-&gt;4)-Mur2Ac(oyl-L-Ala-gamma-D-Glu-L-Lys-D-Ala-D-Ala)-di-trans,octa-cis-undecaprenyl diphosphate + UDP + H(+). It participates in cell wall biogenesis; peptidoglycan biosynthesis. Cell wall formation. Catalyzes the transfer of a GlcNAc subunit on undecaprenyl-pyrophosphoryl-MurNAc-pentapeptide (lipid intermediate I) to form undecaprenyl-pyrophosphoryl-MurNAc-(pentapeptide)GlcNAc (lipid intermediate II). The protein is UDP-N-acetylglucosamine--N-acetylmuramyl-(pentapeptide) pyrophosphoryl-undecaprenol N-acetylglucosamine transferase of Staphylococcus aureus (strain bovine RF122 / ET3-1).